A 388-amino-acid chain; its full sequence is Succinate--CoA ligase [ADP-forming] subunit beta (388 aa).

One can recognise an ATP-grasp domain in the interval 9 to 245 (KELLASYGLP…KSQENERELK (237 aa)). ATP-binding positions include K46, 53 to 55 (GRG), E100, Y103, and E108. Positions 200 and 214 each coordinate Mg(2+). Substrate-binding positions include N265 and 322-324 (GIV).

This sequence belongs to the succinate/malate CoA ligase beta subunit family. As to quaternary structure, heterotetramer of two alpha and two beta subunits. Requires Mg(2+) as cofactor.

It catalyses the reaction succinate + ATP + CoA = succinyl-CoA + ADP + phosphate. The enzyme catalyses GTP + succinate + CoA = succinyl-CoA + GDP + phosphate. It participates in carbohydrate metabolism; tricarboxylic acid cycle; succinate from succinyl-CoA (ligase route): step 1/1. Its function is as follows. Succinyl-CoA synthetase functions in the citric acid cycle (TCA), coupling the hydrolysis of succinyl-CoA to the synthesis of either ATP or GTP and thus represents the only step of substrate-level phosphorylation in the TCA. The beta subunit provides nucleotide specificity of the enzyme and binds the substrate succinate, while the binding sites for coenzyme A and phosphate are found in the alpha subunit. This Neisseria meningitidis serogroup B (strain ATCC BAA-335 / MC58) protein is Succinate--CoA ligase [ADP-forming] subunit beta.